The primary structure comprises 627 residues: Plasmepsin IX (627 aa).

Topologically, residues methionine 1–glutamine 13 are cytoplasmic. Residues phenylalanine 14 to isoleucine 34 form a helical; Signal-anchor for type II membrane protein membrane-spanning segment. At asparagine 35–leucine 627 the chain is on the lumenal side. The region spanning tyrosine 228–alanine 605 is the Peptidase A1 domain. Residues aspartate 246 and aspartate 495 contribute to the active site.

It belongs to the peptidase A1 family. In terms of processing, autocleaved into a p55 mature form.

It is found in the membrane. Its subcellular location is the cytoplasmic vesicle. It localises to the secretory vesicle. The protein resides in the rhoptry. Inhibited by small molecule 49c. Inhibited by small molecule WM382. Functionally, during the asexual blood stage, initiates the proteolytic maturation of several rhoptry proteins and thus, is required for merozoite invasion of host erythrocytes and probably the subsequent development of the ring-stage. Cleaves rhoptry associated protein 1 RAP1 and apical sushi protein ASP during schizont maturation. Also cleaves rhoptry protein RON3. This chain is Plasmepsin IX, found in Plasmodium falciparum (isolate 3D7).